A 100-amino-acid chain; its full sequence is MAKKALIQRELKRQKCVAQFAEKRKALKQAIKEASSLQEKLNLHRKLQQLPRNSSAVRLHNRCRVTGRPKGYFRDFGLSRHVLREMAHDCVLPGVTKSSF.

It belongs to the universal ribosomal protein uS14 family. As to quaternary structure, part of the 30S ribosomal subunit.

It localises to the plastid. It is found in the chloroplast. Binds 16S rRNA, required for the assembly of 30S particles. This chain is Small ribosomal subunit protein uS14c, found in Oltmannsiellopsis viridis (Marine flagellate).